A 310-amino-acid polypeptide reads, in one-letter code: Zinc transporter ZIP9 (310 aa).

Transmembrane regions (helical) follow at residues 7-27 (ISLL…IPLA), 35-55 (LKLI…AVII), 108-128 (ACIG…DQIG), 148-168 (ITTT…LGAA), 178-198 (LIVF…LVSF), 212-232 (HLLV…LGLS), 246-266 (GVAM…HVLP), and 289-309 (VEVV…VGHH).

The protein belongs to the ZIP transporter (TC 2.A.5) family. In terms of tissue distribution, expressed in brain, liver, ovary, and testis.

The protein resides in the golgi apparatus. The protein localises to the trans-Golgi network membrane. It is found in the cell membrane. It localises to the cytoplasm. Its subcellular location is the perinuclear region. The protein resides in the mitochondrion. The protein localises to the nucleus. The enzyme catalyses Zn(2+)(in) = Zn(2+)(out). Its function is as follows. Has dual functions as a membrane-bound androgen receptor and as an androgen-dependent zinc transporter both of which are mediated through G protein activation and are required for the androgen-dependent apoptotic response. Upon androgen binding, mediates apoptosis by directly activating a stimulatory G protein that leads to increased cAMP levels and MAP kinase activity and which is accompanied by increased intracellular free zinc levels. This Micropogonias undulatus (Atlantic croaker) protein is Zinc transporter ZIP9.